A 552-amino-acid chain; its full sequence is Terpene synthase 5 (552 aa).

3 residues coordinate Mg(2+): Asp307, Asp311, and Glu457. A DDXXD motif motif is present at residues 307–311 (DDTYD).

This sequence belongs to the terpene synthase family. Mg(2+) is required as a cofactor.

In terms of biological role, catalyzes the cyclization of farnesyl diphosphate to multiple sesquiterpenes, such as olefins and sesquiterpene alcohols. This is Terpene synthase 5 (TPS5) from Ricinus communis (Castor bean).